The chain runs to 308 residues: MECSNSCLTIDHVIQLDDDKEIRVWETLPKDNTAVRNNTILIASGFARRMDHFAGLAEYLSSNGFHVIRYDSLHHVGLSSGDINEFTMSIGKDSLLIVIEWLKGRGVNKLGLIAASLSARIAYEISNDVDLSFLVTAVGVVNLRDTLERSLKYDYLQLEIEDLPEDLDFEGHNLGSKVFVRDCFKHNWVTLDSTKNKMKNLDIPFIAFTANDDDWVKKAEVLEMMNSISSTKCKLYSLIGSSHDLGENLVVLRNFYQSVTKAAISLDNDSVDLNVEIFEPKFEELTSVTVQERRLKNKIESEILELMN.

Catalysis depends on charge relay system residues S116, D213, and H243.

It belongs to the LuxD family.

Its pathway is lipid metabolism; fatty acid reduction for biolumincescence. Functionally, acyl transferase is part of the fatty acid reductase system required for aldehyde biosynthesis; it produces fatty acids for the luminescent reaction. This Shewanella hanedai (Alteromonas hanedai) protein is Acyl transferase.